The chain runs to 127 residues: MKQQVEVKELKEGKYVLADDEPCVIKSIQKSKPGKHGSAKARIEAIGIFDGQKRSIISSVSAKTYVPIVERKSAQVLSISSNIAQLMDMETYTTFELTIPEDYKDRVTEGKDITYIEAMGKMKIDLR.

Position 35 is a hypusine (K35).

The protein belongs to the eIF-5A family.

It localises to the cytoplasm. Functionally, functions by promoting the formation of the first peptide bond. In Methanococcoides burtonii (strain DSM 6242 / NBRC 107633 / OCM 468 / ACE-M), this protein is Translation initiation factor 5A.